Consider the following 314-residue polypeptide: Mitochondrial translation factor 2 (314 aa).

A disordered region spans residues 111–136 (ENSSNIYDPSSPPDSPRKQQTHLGTI).

Component of the MRH5C complex, composed of mrh5, ppr4, mtf2, and sls1. Proteins mtf2 and sls1 form a subcomplex that serves as a scaffold to bring mrh5 and ppr4 together. The MRH5C complex associates with the small subunit of the mitochondrial ribosome.

In terms of biological role, translation activation factor that as part of the MRH5C complex specifically recruits cox1 mRNA to the mitochondrial ribosome for translation initiation. This chain is Mitochondrial translation factor 2, found in Schizosaccharomyces pombe (strain 972 / ATCC 24843) (Fission yeast).